A 182-amino-acid polypeptide reads, in one-letter code: Isopentenyl-diphosphate Delta-isomerase (182 aa).

2 residues coordinate Mn(2+): histidine 25 and histidine 32. Residues 30–164 (LLHLAFSSWL…PWAFSPWMVM (135 aa)) form the Nudix hydrolase domain. Residue cysteine 67 is part of the active site. Position 67 (cysteine 67) interacts with Mg(2+). Position 69 (histidine 69) interacts with Mn(2+). Glutamate 87 lines the Mg(2+) pocket. Positions 114 and 116 each coordinate Mn(2+). The active site involves glutamate 116.

Belongs to the IPP isomerase type 1 family. In terms of assembly, homodimer. Mg(2+) is required as a cofactor. It depends on Mn(2+) as a cofactor.

The protein resides in the cytoplasm. It carries out the reaction isopentenyl diphosphate = dimethylallyl diphosphate. It functions in the pathway isoprenoid biosynthesis; dimethylallyl diphosphate biosynthesis; dimethylallyl diphosphate from isopentenyl diphosphate: step 1/1. Functionally, catalyzes the 1,3-allylic rearrangement of the homoallylic substrate isopentenyl (IPP) to its highly electrophilic allylic isomer, dimethylallyl diphosphate (DMAPP). The chain is Isopentenyl-diphosphate Delta-isomerase from Escherichia coli O6:H1 (strain CFT073 / ATCC 700928 / UPEC).